The sequence spans 219 residues: 2-phospho-L-lactate guanylyltransferase (219 aa).

It belongs to the CofC family. In terms of assembly, homodimer.

It catalyses the reaction (2S)-2-phospholactate + GTP + H(+) = (2S)-lactyl-2-diphospho-5'-guanosine + diphosphate. Its pathway is cofactor biosynthesis; coenzyme F420 biosynthesis. Its function is as follows. Guanylyltransferase that catalyzes the activation of (2S)-2-phospholactate (2-PL) as (2S)-lactyl-2-diphospho-5'-guanosine, via the condensation of 2-PL with GTP. It is involved in the biosynthesis of coenzyme F420, a hydride carrier cofactor. This chain is 2-phospho-L-lactate guanylyltransferase, found in Methanocaldococcus vulcanius (strain ATCC 700851 / DSM 12094 / M7) (Methanococcus vulcanius).